The primary structure comprises 121 residues: Large ribosomal subunit protein uL14 (121 aa).

Belongs to the universal ribosomal protein uL14 family. In terms of assembly, part of the 50S ribosomal subunit. Forms a cluster with proteins L3 and L19. In the 70S ribosome, L14 and L19 interact and together make contacts with the 16S rRNA in bridges B5 and B8.

Its function is as follows. Binds to 23S rRNA. Forms part of two intersubunit bridges in the 70S ribosome. The protein is Large ribosomal subunit protein uL14 of Synechococcus sp. (strain RCC307).